The chain runs to 376 residues: MAKQDYYEILGVSKTAEEREIRKAYKRLAMKYHPDRNQGDKEAEAKFKEIKEAYEVLTDSQKRAAYDQYGHAAFEQGGMGGGGFGGGADFSDIFGDVFGDIFGGGRGRQRAARGADLRYNMELTLEEAVRGVTKEIRIPTLEECDVCHGSGAKPGTQPQTCPTCHGSGQVQMRQGFFAVQQTCPHCQGRGTLIKDPCNKCHGHGRVERSKTLSVKIPAGVDTGDRIRLAGEGEAGEHGAPAGDLYVQVQVKQHPIFEREGNNLYCEVPINFAMAALGGEIEVPTLDGRVKLKVPGETQTGKLFRMRGKGVKSVRGGAQGDLLCRVVVETPVGLNERQKQLLQELQESFGGPTGEHNSPRSKSFFDGVKKFFDDLTR.

The 66-residue stretch at 5-70 folds into the J domain; that stretch reads DYYEILGVSK…QKRAAYDQYG (66 aa). The segment at 131–209 adopts a CR-type zinc-finger fold; the sequence is GVTKEIRIPT…CHGHGRVERS (79 aa). Residues cysteine 144, cysteine 147, cysteine 161, cysteine 164, cysteine 183, cysteine 186, cysteine 197, and cysteine 200 each coordinate Zn(2+). CXXCXGXG motif repeat units lie at residues 144–151, 161–168, 183–190, and 197–204; these read CDVCHGSG, CPTCHGSG, CPHCQGRG, and CNKCHGHG.

This sequence belongs to the DnaJ family. As to quaternary structure, homodimer. Zn(2+) serves as cofactor.

It is found in the cytoplasm. Participates actively in the response to hyperosmotic and heat shock by preventing the aggregation of stress-denatured proteins and by disaggregating proteins, also in an autonomous, DnaK-independent fashion. Unfolded proteins bind initially to DnaJ; upon interaction with the DnaJ-bound protein, DnaK hydrolyzes its bound ATP, resulting in the formation of a stable complex. GrpE releases ADP from DnaK; ATP binding to DnaK triggers the release of the substrate protein, thus completing the reaction cycle. Several rounds of ATP-dependent interactions between DnaJ, DnaK and GrpE are required for fully efficient folding. Also involved, together with DnaK and GrpE, in the DNA replication of plasmids through activation of initiation proteins. The sequence is that of Chaperone protein DnaJ from Escherichia coli (strain K12 / DH10B).